Here is a 515-residue protein sequence, read N- to C-terminus: GMP synthase [glutamine-hydrolyzing] (515 aa).

In terms of domain architecture, Glutamine amidotransferase type-1 spans 6–198; that stretch reads KVIIIDYGSQ…LFHVAKLKAD (193 aa). The Nucleophile role is filled by Cys-83. Active-site residues include His-172 and Glu-174. A GMPS ATP-PPase domain is found at 199 to 390; that stretch reads WTMSSFVERA…LGLPDFIIWR (192 aa). Residue 226 to 232 coordinates ATP; it reads SGGIDST.

Homodimer.

It carries out the reaction XMP + L-glutamine + ATP + H2O = GMP + L-glutamate + AMP + diphosphate + 2 H(+). It participates in purine metabolism; GMP biosynthesis; GMP from XMP (L-Gln route): step 1/1. In terms of biological role, catalyzes the synthesis of GMP from XMP. The protein is GMP synthase [glutamine-hydrolyzing] of Nitratidesulfovibrio vulgaris (strain DSM 19637 / Miyazaki F) (Desulfovibrio vulgaris).